We begin with the raw amino-acid sequence, 313 residues long: D-alanine--D-alanine ligase (313 aa).

Residues 108-308 (KLVWQQTGVP…YSELVVKVLA (201 aa)) form the ATP-grasp domain. 138 to 193 (VAKLGLPLFVKPASEGSSVAVLKVKTADALPAALSEAATHDKIVIVEKSIEGGGEY) is an ATP binding site. Mg(2+)-binding residues include Asp-262, Glu-275, and Asn-277.

It belongs to the D-alanine--D-alanine ligase family. Mg(2+) is required as a cofactor. It depends on Mn(2+) as a cofactor.

Its subcellular location is the cytoplasm. The catalysed reaction is 2 D-alanine + ATP = D-alanyl-D-alanine + ADP + phosphate + H(+). The protein operates within cell wall biogenesis; peptidoglycan biosynthesis. Its function is as follows. Cell wall formation. This Burkholderia ambifaria (strain ATCC BAA-244 / DSM 16087 / CCUG 44356 / LMG 19182 / AMMD) (Burkholderia cepacia (strain AMMD)) protein is D-alanine--D-alanine ligase.